A 242-amino-acid polypeptide reads, in one-letter code: MLTRKIKLWDINAHITCRLCSGYLIDATTVTECLHTFCRSCLVKYLEENNTCPTCRIVIHQSHPLQYIGHDRTMQDIVYKLVPGLQEAEMRKQREFYHKLGMEVPGDIKGETCSAKQHLDSHRNGETKADDSSNKEAAEEKPEEDNDYHRSDEQVSICLECNSSKLRGLKRKWIRCSAQATVLHLKKFIAKKLNLSSFNELDILCNEEILGKDHTLKFVVVTRWRFKKAPLLLHYRPKMDLL.

The RING-type zinc finger occupies 17-56; that stretch reads CRLCSGYLIDATTVTECLHTFCRSCLVKYLEENNTCPTCR. The segment at 115 to 149 is disordered; the sequence is AKQHLDSHRNGETKADDSSNKEAAEEKPEEDNDYH. Residues 117 to 140 are compositionally biased toward basic and acidic residues; the sequence is QHLDSHRNGETKADDSSNKEAAEE. The interaction with BCORL1 stretch occupies residues 132–242; that stretch reads SSNKEAAEEK…LHYRPKMDLL (111 aa).

Component of a PRC1-like complex that contains PCGF3, RNF2 and RYBP. Interacts with CBX6, CBX7 and CBX8. Interacts with BCORL1.

The protein localises to the nucleus. It is found in the nucleoplasm. Functionally, component of a Polycomb group (PcG) multiprotein PRC1-like complex, a complex class required to maintain the transcriptionally repressive state of many genes, including Hox genes, throughout development. PcG PRC1 complex acts via chromatin remodeling and modification of histones; it mediates monoubiquitination of histone H2A 'Lys-119', rendering chromatin heritably changed in its expressibility. Within the PRC1-like complex, regulates RNF2 ubiquitin ligase activity. Plays a redundant role with PCGF5 as part of a PRC1-like complex that mediates monoubiquitination of histone H2A 'Lys-119' on the X chromosome and is required for normal silencing of one copy of the X chromosome in XX females. This chain is Polycomb group RING finger protein 3 (PCGF3), found in Homo sapiens (Human).